The primary structure comprises 222 residues: MANLPILDASGKEVGQYEIDTEQIANRVSKQLLHDVVVMYQANKRQGSHNTRTRGQVSGTNKKMYRQKGTGNARAGSKRTNVRRGGGVARTVKPRDYSYRLPKKAIKIATRMAIRSRIDDGEIVVINELKLDAPKTSQIAQILKNLGLANTTTLIATAGDDQIIYKSGRNISGVTVEPVRQLNALTLLTPKRVLFTQEALDRVKDGTFAGSTQNTNEAEAAA.

Positions 67–87 are disordered; that stretch reads QKGTGNARAGSKRTNVRRGGG.

It belongs to the universal ribosomal protein uL4 family. As to quaternary structure, part of the 50S ribosomal subunit.

Its function is as follows. One of the primary rRNA binding proteins, this protein initially binds near the 5'-end of the 23S rRNA. It is important during the early stages of 50S assembly. It makes multiple contacts with different domains of the 23S rRNA in the assembled 50S subunit and ribosome. In terms of biological role, forms part of the polypeptide exit tunnel. The protein is Large ribosomal subunit protein uL4 of Rhodopirellula baltica (strain DSM 10527 / NCIMB 13988 / SH1).